A 159-amino-acid polypeptide reads, in one-letter code: MRRAVCPGSFDPITNGHLDIIARASSLYDEVYVAVMINQAKKGLFEIEERIDLIRRVTAEYGNVRVESFHGLLVDFCKQREIPAIVKGLRAVSDFDYELQMAQMNNGLSGVETLFIPTNPTYSFLSSSLVKEVATWGGDVAHLVPPLVLEALTERLRNR.

Residue Ser9 coordinates substrate. ATP-binding positions include 9 to 10 and His17; that span reads SF. Residues Lys41, Leu73, and Lys87 each contribute to the substrate site. Residues 88–90, Glu98, and 122–128 each bind ATP; these read GLR and YSFLSSS.

The protein belongs to the bacterial CoaD family. As to quaternary structure, homohexamer. It depends on Mg(2+) as a cofactor.

The protein localises to the cytoplasm. It carries out the reaction (R)-4'-phosphopantetheine + ATP + H(+) = 3'-dephospho-CoA + diphosphate. It functions in the pathway cofactor biosynthesis; coenzyme A biosynthesis; CoA from (R)-pantothenate: step 4/5. Functionally, reversibly transfers an adenylyl group from ATP to 4'-phosphopantetheine, yielding dephospho-CoA (dPCoA) and pyrophosphate. This chain is Phosphopantetheine adenylyltransferase, found in Streptomyces coelicolor (strain ATCC BAA-471 / A3(2) / M145).